Consider the following 1262-residue polypeptide: Unconventional myosin-VI (1262 aa).

The region spanning 2–53 (EDGKPVWAPHPTDGFQMGNIVDIGPDSLTIEPLNQKGKTFLALINQVFPAEE) is the Myosin N-terminal SH3-like domain. Residues 57-771 (KDVEDNCSLM…KFAEFDQIMK (715 aa)) enclose the Myosin motor domain. Residue 151-158 (GESGAGKT) participates in ATP binding. Phosphoserine is present on Ser-267. Residues 273-317 (YLNRGCTRFFANKETDKQILQNRKSPEYVKAGSLKDPLLDDHGDF) form a responsible for slow ATPase activity region. The residue at position 405 (Thr-405) is a Phosphothreonine. Residue Ser-604 is modified to Phosphoserine. 2 actin-binding regions span residues 651 to 673 (LNLL…KPNL) and 665 to 672 (FIRCIKPN). Residues 782-810 (KRVNLWLVCSRWKKVQWCSLSVIKLKNKI) form a required for binding calmodulin region. Residues 814–834 (AEACIKMQKTIRMWLCKRRHK) enclose the IQ domain. Residues 835 to 916 (PRIDGLVKVG…EDLLSALQKK (82 aa)) are three-helix bundle. Positions 864 to 984 (KPEVNRQIKN…EDDEKRIQAE (121 aa)) form a coiled coil. Positions 917–984 (KQQEEEAERL…EDDEKRIQAE (68 aa)) are SAH. The segment at 933–955 (MEKERKRREEDEERRRKEEEERR) is disordered. At Ser-1025 the chain carries Phosphoserine. Residues 1034 to 1253 (LRRGPAVQAT…ESRQARPTYA (220 aa)) form an interaction with TAX1BP1 and CALCOCO2/NDP52 region. The interval 1084–1086 (RRL) is interaction with OPTN. Position 1123 is a phosphoserine (Ser-1123). The interval 1125-1253 (QQNPAAQLPA…ESRQARPTYA (129 aa)) is interaction with TOM1.

It belongs to the TRAFAC class myosin-kinesin ATPase superfamily. Myosin family. In terms of assembly, homodimer; dimerization seems to implicate the unfolding of the three-helix bundle region creating an additional calmodulin binding site, and cargo binding. Able to function as a monomer under specific conditions in vitro. Forms a complex with CFTR and DAB2 in the apical membrane of epithelial cells. Component of the DISP/DOCK7-induced septin displacement complex, at least composed of DOCK7, LRCH3 and MYO6. Binding to calmodulin through a unique insert, not found in other myosins, located in the neck region between the motor domain and the IQ domain appears to contribute to the directionality reversal. This interaction occurs only if the C-terminal lobe of calmodulin is occupied by calcium. Interaction with F-actin/ACTN1 occurs only at the apical brush border domain of the proximal tubule cells. Interacts with DAB2. In vitro, the C-terminal globular tail binds a C-terminal region of DAB2. Interacts with CFTR. Interacts with CABP5. Interacts (via residues 1128-1256) with TOM1 (via residues 392-463). Interacts (via residues 1060-1285) with OPTN. Interacts (via residues 1060-1285) with TAX1BP1 and CALCOCO2/NDP52. Interacts with TOM1L2. Interacts with CLIC5; may work together in a complex which also includes RDX and MYO6 to stabilize linkages between the plasma membrane and subjacent actin cytoskeleton at the base of stereocilia. Post-translationally, phosphorylation in the motor domain, induced by EGF, results in translocation of MYO6 from the cell surface to membrane ruffles and affects F-actin dynamics. Phosphorylated in vitro by p21-activated kinase (PAK). As to expression, within the cochlea, expressed specifically within the sensory hair cells (at protein level). Expressed in the inner and outer plexiform layer of the retina (at protein level). Widely expressed. Expressed in the brain, kidney, liver, and testis.

It localises to the golgi apparatus. The protein localises to the trans-Golgi network membrane. The protein resides in the nucleus. It is found in the cytoplasm. Its subcellular location is the perinuclear region. It localises to the membrane. The protein localises to the clathrin-coated pit. The protein resides in the cytoplasmic vesicle. It is found in the clathrin-coated vesicle. Its subcellular location is the cell projection. It localises to the filopodium. The protein localises to the ruffle membrane. The protein resides in the microvillus. It is found in the cytosol. Functionally, myosins are actin-based motor molecules with ATPase activity. Unconventional myosins serve in intracellular movements. Myosin 6 is a reverse-direction motor protein that moves towards the minus-end of actin filaments. Has slow rate of actin-activated ADP release due to weak ATP binding. Functions in a variety of intracellular processes such as vesicular membrane trafficking and cell migration. Required for the structural integrity of the Golgi apparatus via the p53-dependent pro-survival pathway. Appears to be involved in a very early step of clathrin-mediated endocytosis in polarized epithelial cells. Together with TOM1, mediates delivery of endocytic cargo to autophagosomes thereby promoting autophagosome maturation and driving fusion with lysosomes. Links TOM1 with autophagy receptors, such as TAX1BP1; CALCOCO2/NDP52 and OPTN. May act as a regulator of F-actin dynamics. As part of the DISP complex, may regulate the association of septins with actin and thereby regulate the actin cytoskeleton. May play a role in transporting DAB2 from the plasma membrane to specific cellular targets. May play a role in the extension and network organization of neurites. Required for structural integrity of inner ear hair cells. Required for the correct localization of CLIC5 and RDX at the stereocilium base. Modulates RNA polymerase II-dependent transcription. The chain is Unconventional myosin-VI (Myo6) from Mus musculus (Mouse).